Here is a 174-residue protein sequence, read N- to C-terminus: Caltractin ICL1e (174 aa).

A disordered region spans residues 1-33 (MSKKQQAPVAQKPVGKQQQVNRKPQDRPGLTED). EF-hand domains are found at residues 33–68 (DEIE…LGFD), 88–103 (IDFD…KLGN), 105–140 (ESRD…LGET), and 141–174 (MTAE…KRTF).

This sequence belongs to the centrin family. In terms of assembly, monomer.

It is found in the cytoplasm. The protein localises to the cytoskeleton. In terms of biological role, plays a fundamental role in microtubule organizing center structure and function. Component of the infraciliary lattice (ICL) and the ciliary basal bodies. The chain is Caltractin ICL1e (Icl1e) from Paramecium tetraurelia.